Here is a 400-residue protein sequence, read N- to C-terminus: Lysophospholipid transporter LplT (400 aa).

A run of 11 helical transmembrane segments spans residues 19-39 (VIVA…ATLA), 53-73 (VLQM…GQIA), 91-111 (AGAA…LVGI), 139-159 (LMEA…GVLA), 164-184 (IAAL…NLFI), 227-247 (LFWG…PVAL), 257-277 (YLNA…AKLV), 281-301 (TVSR…IFSL), 304-324 (ALLP…FFVV), 352-372 (NSAM…GVPA), and 373-393 (VAIG…LWIW).

It belongs to the major facilitator superfamily. LplT (TC 2.A.1.42) family.

The protein localises to the cell inner membrane. In terms of biological role, catalyzes the facilitated diffusion of 2-acyl-glycero-3-phosphoethanolamine (2-acyl-GPE) into the cell. This chain is Lysophospholipid transporter LplT, found in Salmonella gallinarum (strain 287/91 / NCTC 13346).